The primary structure comprises 160 residues: UPF0225 protein CGSHiEE_01665 (160 aa).

Belongs to the UPF0225 family.

This Haemophilus influenzae (strain PittEE) protein is UPF0225 protein CGSHiEE_01665.